The following is a 763-amino-acid chain: 5-methyltetrahydropteroyltriglutamate--homocysteine methyltransferase (763 aa).

Residues 16 to 19 (RELK) and Lys-117 contribute to the 5-methyltetrahydropteroyltri-L-glutamate site. Residues 438–440 (IGS) and Glu-491 contribute to the L-homocysteine site. Residues 438–440 (IGS) and Glu-491 contribute to the L-methionine site. Residues 522–523 (RC) and Trp-568 contribute to the 5-methyltetrahydropteroyltri-L-glutamate site. Residue Asp-606 participates in L-homocysteine binding. Asp-606 serves as a coordination point for L-methionine. Glu-612 is a 5-methyltetrahydropteroyltri-L-glutamate binding site. 3 residues coordinate Zn(2+): His-648, Cys-650, and Glu-672. The active-site Proton donor is the His-701. Cys-733 contributes to the Zn(2+) binding site.

It belongs to the vitamin-B12 independent methionine synthase family. Zn(2+) serves as cofactor.

The enzyme catalyses 5-methyltetrahydropteroyltri-L-glutamate + L-homocysteine = tetrahydropteroyltri-L-glutamate + L-methionine. The protein operates within amino-acid biosynthesis; L-methionine biosynthesis via de novo pathway; L-methionine from L-homocysteine (MetE route): step 1/1. In terms of biological role, catalyzes the transfer of a methyl group from 5-methyltetrahydrofolate to homocysteine resulting in methionine formation. The protein is 5-methyltetrahydropteroyltriglutamate--homocysteine methyltransferase of Pseudomonas paraeruginosa (strain DSM 24068 / PA7) (Pseudomonas aeruginosa (strain PA7)).